Consider the following 617-residue polypeptide: Probable potassium transport system protein Kup 3 (617 aa).

11 helical membrane passes run 42-62 (VASL…ALLI), 95-115 (LVVG…TPAI), 129-149 (PSLA…LFMM), 160-180 (IFGP…IHGI), 206-226 (VSFA…AMYA), 240-260 (WFAI…ALLI), 282-302 (LVAF…SGVF), 330-350 (IYVP…VLSF), 360-380 (YGIA…LVAI), 386-406 (PWLV…FFSA), and 411-431 (LFEG…MMLT).

This sequence belongs to the HAK/KUP transporter (TC 2.A.72) family.

Its subcellular location is the cell inner membrane. It carries out the reaction K(+)(in) + H(+)(in) = K(+)(out) + H(+)(out). Its function is as follows. Transport of potassium into the cell. Likely operates as a K(+):H(+) symporter. This is Probable potassium transport system protein Kup 3 from Bradyrhizobium diazoefficiens (strain JCM 10833 / BCRC 13528 / IAM 13628 / NBRC 14792 / USDA 110).